The chain runs to 166 residues: Cytochrome P450 regulator dap1 (166 aa).

A helical membrane pass occupies residues 4–21 (TQVVFIVTLFLYLLITRW). A Cytochrome b5 heme-binding domain is found at 42–145 (DYTPAELKEY…QKYQAVGRLI (104 aa)). Ser-108 carries the post-translational modification Phosphoserine. Tyr-138 contributes to the heme binding site.

It belongs to the cytochrome b5 family. MAPR subfamily. In terms of assembly, interacts with erg5 and erg11.

Its subcellular location is the endoplasmic reticulum. It localises to the membrane. In terms of biological role, required for sterol biosynthesis. Functions as a positive regulator of cytochrome P450 enzymes erg5 and erg11. Function requires bound heme. The polypeptide is Cytochrome P450 regulator dap1 (dap1) (Schizosaccharomyces pombe (strain 972 / ATCC 24843) (Fission yeast)).